The following is a 448-amino-acid chain: Putative flavin-containing monooxygenase FMO GS-OX-like 10 (448 aa).

Position 18-23 (18-23) interacts with FAD; that stretch reads GAGAAG. 212-217 contributes to the NADP(+) binding site; sequence GSSVSG.

It belongs to the FMO family. FAD serves as cofactor.

Catalyzes the conversion of methylthioalkyl glucosinolates of any chain length into methylsulfinylalkyl glucosinolates. The sequence is that of Putative flavin-containing monooxygenase FMO GS-OX-like 10 from Arabidopsis thaliana (Mouse-ear cress).